The sequence spans 735 residues: MATKVFPSFSKGLAQDPTTRRIWFGIATAHDFESHDGMTEELVYQKIFASHFGQLSIIFLWTSGNLFHVAWQGNFEQWVQDPLHVRPIAHAIWDPHFGQPAVEAFTRGGATGPVNIATSGVYQWWYTIGLRANQDLYNGSLFLSILSALFLLAGWLHLQKNFRPSLSWFKDAESRLNHHLSGLFGISSLAWTGHLVHVAIPASRGQRVGWDNFLTTLPHPQGLAPLWTGNWAAYAQNPDSASHIFSTSQGSGQAILTFLGGFHPQTQSLWLSDMAHHHLAIAVIFVLAGHMYRTSFGIGHRLSDILDSHVAPSGNMGGGHRGLFETINNSLHFQLGLALASVGTICSLVAQHMYSLPPYAYLANDFTTQAALYTHHQYIASFIICGAFAHGAIFFIRDYDPEQNKGNVLARMLDHKEAIISHLSWVSLFLGFHTLGLYVHNDVMQAFGTPEKQILIEPVFAQWIQASHGKALYGFDVLLSSSGSVAFSASQTLWLPGWLDAINNNSNSLFLNIGPGDFLVHHAIALGLHTTTLILVKGALDARGSKLMPDKKDFGYSFPCDGPGRGGTCDISAYDAFYLSIFWSLNTVGWVTFYWHWKHLTLWQGNVAQFDESSTYIMGWLRDYLWLNSSQLINGYNPFGMNSLSVWAWVFLFGHLIYATGFMFLISWRGYWQELIETLVWSHEKTPIANLVQWVDKPVALSIVQARLVGLVHFSVGYIFTYAAFLIASTSGKFG.

8 consecutive transmembrane segments (helical) span residues 47 to 70 (IFASHFGQLSIIFLWTSGNLFHVA), 136 to 159 (LYNGSLFLSILSALFLLAGWLHLQ), 176 to 200 (LNHHLSGLFGISSLAWTGHLVHVAI), 274 to 292 (MAHHHLAIAVIFVLAGHMY), 331 to 354 (LHFQLGLALASVGTICSLVAQHMY), 370 to 396 (AALYTHHQYIASFIICGAFAHGAIFFI), 418 to 440 (AIISHLSWVSLFLGFHTLGLYVH), and 518 to 536 (FLVHHAIALGLHTTTLILV). [4Fe-4S] cluster-binding residues include cysteine 560 and cysteine 569. The next 2 helical transmembrane spans lie at 576–597 (AFYLSIFWSLNTVGWVTFYWHW) and 644–666 (LSVWAWVFLFGHLIYATGFMFLI). Positions 655, 663, and 671 each coordinate chlorophyll a. Tryptophan 672 contributes to the phylloquinone binding site. The helical transmembrane segment at 708 to 728 (LVGLVHFSVGYIFTYAAFLIA) threads the bilayer.

It belongs to the PsaA/PsaB family. The PsaA/B heterodimer binds the P700 chlorophyll special pair and subsequent electron acceptors. PSI consists of a core antenna complex that captures photons, and an electron transfer chain that converts photonic excitation into a charge separation. The eukaryotic PSI reaction center is composed of at least 11 subunits. Requires P700 is a chlorophyll a/chlorophyll a' dimer, A0 is one or more chlorophyll a, A1 is one or both phylloquinones and FX is a shared 4Fe-4S iron-sulfur center. as cofactor.

It localises to the plastid. It is found in the chloroplast thylakoid membrane. The catalysed reaction is reduced [plastocyanin] + hnu + oxidized [2Fe-2S]-[ferredoxin] = oxidized [plastocyanin] + reduced [2Fe-2S]-[ferredoxin]. PsaA and PsaB bind P700, the primary electron donor of photosystem I (PSI), as well as the electron acceptors A0, A1 and FX. PSI is a plastocyanin/cytochrome c6-ferredoxin oxidoreductase, converting photonic excitation into a charge separation, which transfers an electron from the donor P700 chlorophyll pair to the spectroscopically characterized acceptors A0, A1, FX, FA and FB in turn. Oxidized P700 is reduced on the lumenal side of the thylakoid membrane by plastocyanin or cytochrome c6. The polypeptide is Photosystem I P700 chlorophyll a apoprotein A2 (Stigeoclonium helveticum (Green alga)).